Here is a 165-residue protein sequence, read N- to C-terminus: MEPCRSLALFAGSLGLTSSLIALTTDFWIVATGPHFSAHSGLWPTSQETQVAGYIHVTQSFCILAVLWGLVSVSFLILSCIPALSAPGRGPLVSTVMAFSAALSILVAMAVYTSMRWSQTPFSQVQTFFSWSFYLGWVSFILFLFAGCLSLGAHCRTRRAEYETL.

The next 4 helical transmembrane spans lie at 9 to 29 (LFAGSLGLTSSLIALTTDFWI), 61 to 81 (FCILAVLWGLVSVSFLILSCI), 92 to 112 (LVSTVMAFSAALSILVAMAVY), and 133 to 153 (FYLGWVSFILFLFAGCLSLGA).

This sequence belongs to the PMP-22/EMP/MP20 family. As to expression, predominantly expressed by leukocytes with cytotoxic activity such as CD8(+) T-cells and natural killer cells.

The protein resides in the cell membrane. Its subcellular location is the cytolytic granule membrane. Functionally, regulates cytotoxic granule exocytosis in effector lymphocytes, thus acting as a critical mediator of inflammation in a broad range of infectious and non-infectious diseases. Essential for cytotoxic degranulation of natural killer (NK) cells and CD8(+) T-cells and for the activation of CD4(+) T-cells following infection. Plays a critical role in CD8(+) T-cell and NK cell-mediated cytolysis of target cells and contributes to the cytolytic activity via the perforin/granzyme pathway by enhancing exocytosis of LAMP1-carrying lytic granules. Contributes to NK cell-mediated control of cancer metastasis. The sequence is that of Protein NKG7 (Nkg7) from Mus musculus (Mouse).